We begin with the raw amino-acid sequence, 431 residues long: Tyrosine--tRNA ligase (431 aa).

L-tyrosine is bound at residue Tyr-34. The 'HIGH' region motif lies at 39–48 (PTADSLHIGH). Residues Tyr-171 and Gln-175 each contribute to the L-tyrosine site. The short motif at 231 to 235 (KFGKT) is the 'KMSKS' region element. Lys-234 is an ATP binding site. The 70-residue stretch at 353 to 422 (INVVEALVKT…GKYTILRRGK (70 aa)) folds into the S4 RNA-binding domain.

This sequence belongs to the class-I aminoacyl-tRNA synthetase family. TyrS type 1 subfamily. In terms of assembly, homodimer.

The protein localises to the cytoplasm. It carries out the reaction tRNA(Tyr) + L-tyrosine + ATP = L-tyrosyl-tRNA(Tyr) + AMP + diphosphate + H(+). Catalyzes the attachment of tyrosine to tRNA(Tyr) in a two-step reaction: tyrosine is first activated by ATP to form Tyr-AMP and then transferred to the acceptor end of tRNA(Tyr). The polypeptide is Tyrosine--tRNA ligase (Neisseria meningitidis serogroup A / serotype 4A (strain DSM 15465 / Z2491)).